The following is a 406-amino-acid chain: Bifunctional enzyme IspD/IspF (406 aa).

The 2-C-methyl-D-erythritol 4-phosphate cytidylyltransferase stretch occupies residues 1–246 (MTQMHSTQPM…KLSAGLLPDV (246 aa)). Positions 247-406 (RTGNGYDVHQ…ATVVYRGGRP (160 aa)) are 2-C-methyl-D-erythritol 2,4-cyclodiphosphate synthase. A divalent metal cation-binding residues include D253 and H255. 4-CDP-2-C-methyl-D-erythritol 2-phosphate-binding positions include 253-255 (DVH) and 279-280 (HS). Residue H287 coordinates a divalent metal cation. 4-CDP-2-C-methyl-D-erythritol 2-phosphate is bound by residues 301–303 (DIG), 377–380 (TTNE), F384, and R387.

The protein in the N-terminal section; belongs to the IspD/TarI cytidylyltransferase family. IspD subfamily. This sequence in the C-terminal section; belongs to the IspF family. A divalent metal cation is required as a cofactor.

It carries out the reaction 2-C-methyl-D-erythritol 4-phosphate + CTP + H(+) = 4-CDP-2-C-methyl-D-erythritol + diphosphate. It catalyses the reaction 4-CDP-2-C-methyl-D-erythritol 2-phosphate = 2-C-methyl-D-erythritol 2,4-cyclic diphosphate + CMP. It functions in the pathway isoprenoid biosynthesis; isopentenyl diphosphate biosynthesis via DXP pathway; isopentenyl diphosphate from 1-deoxy-D-xylulose 5-phosphate: step 2/6. Its pathway is isoprenoid biosynthesis; isopentenyl diphosphate biosynthesis via DXP pathway; isopentenyl diphosphate from 1-deoxy-D-xylulose 5-phosphate: step 4/6. In terms of biological role, bifunctional enzyme that catalyzes the formation of 4-diphosphocytidyl-2-C-methyl-D-erythritol from CTP and 2-C-methyl-D-erythritol 4-phosphate (MEP) (IspD), and catalyzes the conversion of 4-diphosphocytidyl-2-C-methyl-D-erythritol 2-phosphate (CDP-ME2P) to 2-C-methyl-D-erythritol 2,4-cyclodiphosphate (ME-CPP) with a corresponding release of cytidine 5-monophosphate (CMP) (IspF). This chain is Bifunctional enzyme IspD/IspF, found in Rhizobium rhizogenes (strain K84 / ATCC BAA-868) (Agrobacterium radiobacter).